The following is a 314-amino-acid chain: Methionyl-tRNA formyltransferase (314 aa).

110 to 113 (SLLP) is a (6S)-5,6,7,8-tetrahydrofolate binding site.

This sequence belongs to the Fmt family.

The enzyme catalyses L-methionyl-tRNA(fMet) + (6R)-10-formyltetrahydrofolate = N-formyl-L-methionyl-tRNA(fMet) + (6S)-5,6,7,8-tetrahydrofolate + H(+). Functionally, attaches a formyl group to the free amino group of methionyl-tRNA(fMet). The formyl group appears to play a dual role in the initiator identity of N-formylmethionyl-tRNA by promoting its recognition by IF2 and preventing the misappropriation of this tRNA by the elongation apparatus. The sequence is that of Methionyl-tRNA formyltransferase from Levilactobacillus brevis (strain ATCC 367 / BCRC 12310 / CIP 105137 / JCM 1170 / LMG 11437 / NCIMB 947 / NCTC 947) (Lactobacillus brevis).